The chain runs to 470 residues: Syncoilin (470 aa).

A disordered region spans residues 1-43; the sequence is MASPEPLRGGDGARASREPHTEASFPLQESESPKEAKTFNPEA. Positions 1-148 are head; that stretch reads MASPEPLRGG…TEGSLPAQPI (148 aa). Ser32 carries the phosphoserine modification. An IF rod domain is found at 157 to 452; that stretch reads SVEDLERLEA…AMLPKSLEQA (296 aa). Positions 158–192 are coil 1A; sequence VEDLERLEARFQQCVQAVSQLEEERDQLIHELVLL. A linker 1 region spans residues 193–219; that stretch reads REPALQEVQQVHQDILAAYKLHAQAEL. The segment at 220 to 297 is coil 1b; it reads ERDGLREEIR…KEQLQQQLEA (78 aa). The interval 298–337 is linker 2; it reads PPTQSDGHFLQESRRLSTQFENLMAESRQGLEEEYEPQLL. At Ser314 the chain carries Phosphoserine. A coil 2 region spans residues 338–445; it reads RLLERKEAGT…EELSTYKAML (108 aa). Positions 446-470 are disordered; that stretch reads PKSLEQADAPTSQAGGVEAQSPGTV. Residues 446 to 470 form a tail region; the sequence is PKSLEQADAPTSQAGGVEAQSPGTV.

This sequence belongs to the intermediate filament family. May link the dystrophin-associated glycoprotein complex (DAPC) to intracellular desmin (DES) filaments. Interacts with DES and DTNA. In terms of tissue distribution, detected strongly in skeletal muscle and heart and weakly in lung (at protein level). Highly expressed in skeletal muscle and lung and weakly in lung and testis.

Its subcellular location is the cytoplasm. The protein resides in the perinuclear region. Atypical type III intermediate filament (IF) protein that may play a supportive role in the efficient coupling of mechanical stress between the myofibril and fiber exterior. May facilitate lateral force transmission during skeletal muscle contraction. Does not form homofilaments nor heterofilaments with other IF proteins. This Mus musculus (Mouse) protein is Syncoilin (Sync).